Here is a 271-residue protein sequence, read N- to C-terminus: Thiazole synthase (271 aa).

The active-site Schiff-base intermediate with DXP is the Lys-104. Residues Gly-165, 192–193 (AG), and 214–215 (NT) each bind 1-deoxy-D-xylulose 5-phosphate.

Belongs to the ThiG family. Homotetramer. Forms heterodimers with either ThiH or ThiS.

It localises to the cytoplasm. The enzyme catalyses [ThiS sulfur-carrier protein]-C-terminal-Gly-aminoethanethioate + 2-iminoacetate + 1-deoxy-D-xylulose 5-phosphate = [ThiS sulfur-carrier protein]-C-terminal Gly-Gly + 2-[(2R,5Z)-2-carboxy-4-methylthiazol-5(2H)-ylidene]ethyl phosphate + 2 H2O + H(+). It participates in cofactor biosynthesis; thiamine diphosphate biosynthesis. Its function is as follows. Catalyzes the rearrangement of 1-deoxy-D-xylulose 5-phosphate (DXP) to produce the thiazole phosphate moiety of thiamine. Sulfur is provided by the thiocarboxylate moiety of the carrier protein ThiS. In vitro, sulfur can be provided by H(2)S. The protein is Thiazole synthase of Burkholderia mallei (strain ATCC 23344).